A 210-amino-acid chain; its full sequence is Tetraspanin-31 (210 aa).

The Cytoplasmic segment spans residues 1-12 (MVCGGFACSKNA). A helical transmembrane segment spans residues 13–33 (LCALNVVYMLVSLLLIGVAAW). Topologically, residues 34–44 (GKGLGLVSSIH) are extracellular. A helical transmembrane segment spans residues 45 to 65 (IIGGVIAVGVFLLLIAVAGLV). At 66-72 (GAVNHHQ) the chain is on the cytoplasmic side. Residues 73–93 (VLLFFYMIILGLVFIFQFVIS) traverse the membrane as a helical segment. Topologically, residues 94–173 (CSCLAINRSK…FLKHSDEALK (80 aa)) are extracellular. 4 N-linked (GlcNAc...) asparagine glycosylation sites follow: Asn100, Asn109, Asn117, and Asn134. A helical membrane pass occupies residues 174–194 (ILGGVGLFFSFTEILGVWLAM). Residues 195-210 (RFRNQKDPRANPSAFL) are Cytoplasmic-facing.

It belongs to the tetraspanin (TM4SF) family.

It is found in the membrane. This Homo sapiens (Human) protein is Tetraspanin-31 (TSPAN31).